Consider the following 295-residue polypeptide: Protease HtpX homolog (295 aa).

2 consecutive transmembrane segments (helical) span residues 15–35 (LVMA…GYAF) and 39–59 (AQTG…VILG). Zn(2+) is bound at residue histidine 143. The active site involves glutamate 144. Histidine 147 is a binding site for Zn(2+). 2 helical membrane-spanning segments follow: residues 159-179 (ALAL…AMWW) and 195-215 (VIML…ASMA). Glutamate 224 contacts Zn(2+).

It belongs to the peptidase M48B family. Zn(2+) serves as cofactor.

It localises to the cell membrane. The protein is Protease HtpX homolog of Ligilactobacillus salivarius (strain UCC118) (Lactobacillus salivarius).